Reading from the N-terminus, the 168-residue chain is Siroheme decarboxylase NirH subunit (168 aa).

Belongs to the Ahb/Nir family. Probably forms a complex composed of NirD, NirL, NirG and NirH. All proteins are required for the total conversion of siroheme to didecarboxysiroheme.

The catalysed reaction is siroheme + 2 H(+) = 12,18-didecarboxysiroheme + 2 CO2. Its pathway is porphyrin-containing compound metabolism. Involved in heme d1 biosynthesis. Catalyzes the decarboxylation of siroheme into didecarboxysiroheme. The chain is Siroheme decarboxylase NirH subunit from Stutzerimonas stutzeri (Pseudomonas stutzeri).